The chain runs to 227 residues: Uracil-DNA glycosylase (227 aa).

The Proton acceptor role is filled by Asp65.

Belongs to the uracil-DNA glycosylase (UDG) superfamily. UNG family.

The protein localises to the cytoplasm. It carries out the reaction Hydrolyzes single-stranded DNA or mismatched double-stranded DNA and polynucleotides, releasing free uracil.. In terms of biological role, excises uracil residues from the DNA which can arise as a result of misincorporation of dUMP residues by DNA polymerase or due to deamination of cytosine. The protein is Uracil-DNA glycosylase of Lactobacillus delbrueckii subsp. bulgaricus (strain ATCC BAA-365 / Lb-18).